Here is a 233-residue protein sequence, read N- to C-terminus: tRNA (guanine-N(7)-)-methyltransferase (233 aa).

4 residues coordinate S-adenosyl-L-methionine: Glu62, Glu87, Asp114, and Asp136. The active site involves Asp136. Substrate-binding positions include Lys140, Asp172, and 211–214 (TRYE).

Belongs to the class I-like SAM-binding methyltransferase superfamily. TrmB family.

The enzyme catalyses guanosine(46) in tRNA + S-adenosyl-L-methionine = N(7)-methylguanosine(46) in tRNA + S-adenosyl-L-homocysteine. It functions in the pathway tRNA modification; N(7)-methylguanine-tRNA biosynthesis. Functionally, catalyzes the formation of N(7)-methylguanine at position 46 (m7G46) in tRNA. In Erythrobacter litoralis (strain HTCC2594), this protein is tRNA (guanine-N(7)-)-methyltransferase.